Reading from the N-terminus, the 133-residue chain is NADPH-dependent 7-cyano-7-deazaguanine reductase (133 aa).

The active-site Thioimide intermediate is Cys49. Catalysis depends on Asp56, which acts as the Proton donor. Substrate is bound by residues 71 to 73 (IEL) and 90 to 91 (HE).

Belongs to the GTP cyclohydrolase I family. QueF type 1 subfamily.

It localises to the cytoplasm. The catalysed reaction is 7-aminomethyl-7-carbaguanine + 2 NADP(+) = 7-cyano-7-deazaguanine + 2 NADPH + 3 H(+). It functions in the pathway tRNA modification; tRNA-queuosine biosynthesis. Functionally, catalyzes the NADPH-dependent reduction of 7-cyano-7-deazaguanine (preQ0) to 7-aminomethyl-7-deazaguanine (preQ1). The sequence is that of NADPH-dependent 7-cyano-7-deazaguanine reductase from Leptospira interrogans serogroup Icterohaemorrhagiae serovar copenhageni (strain Fiocruz L1-130).